Here is a 103-residue protein sequence, read N- to C-terminus: Large ribosomal subunit protein bL21 (103 aa).

The protein belongs to the bacterial ribosomal protein bL21 family. In terms of assembly, part of the 50S ribosomal subunit. Contacts protein L20.

Functionally, this protein binds to 23S rRNA in the presence of protein L20. The protein is Large ribosomal subunit protein bL21 of Kineococcus radiotolerans (strain ATCC BAA-149 / DSM 14245 / SRS30216).